Here is a 630-residue protein sequence, read N- to C-terminus: Protein phosphatase 2C-like domain-containing protein 1 (630 aa).

One can recognise a PPM-type phosphatase domain in the interval 170–621 (GVGICEDRNS…DNITVMVIFL (452 aa)). Over residues 557–569 (TTHRKPCSEKVTD) the composition is skewed to basic and acidic residues. Residues 557-578 (TTHRKPCSEKVTDRPTSVNDVA) are disordered.

The protein belongs to the PP2C family.

The protein is Protein phosphatase 2C-like domain-containing protein 1 (PP2D1) of Homo sapiens (Human).